The sequence spans 105 residues: uncharacterized protein (105 aa).

Belongs to the asfivirus C122R family.

The protein localises to the virion. This is an uncharacterized protein from African swine fever virus (strain Badajoz 1971 Vero-adapted) (Ba71V).